A 132-amino-acid polypeptide reads, in one-letter code: MGKPAAERRLSENEAQAFARLIRSSPRKLNLVAQLIRGKAAGEALALLTFSKRRVAGEVKKVLQSAIANAENNHQLDVDRLYVSHATVGRALVMKRFHARARGRGARVEKWFSNLTVVVRERADEPVQEAAE.

Belongs to the universal ribosomal protein uL22 family. Part of the 50S ribosomal subunit.

In terms of biological role, this protein binds specifically to 23S rRNA; its binding is stimulated by other ribosomal proteins, e.g. L4, L17, and L20. It is important during the early stages of 50S assembly. It makes multiple contacts with different domains of the 23S rRNA in the assembled 50S subunit and ribosome. Its function is as follows. The globular domain of the protein is located near the polypeptide exit tunnel on the outside of the subunit, while an extended beta-hairpin is found that lines the wall of the exit tunnel in the center of the 70S ribosome. The protein is Large ribosomal subunit protein uL22 of Rhodospirillum centenum (strain ATCC 51521 / SW).